A 259-amino-acid chain; its full sequence is Methanethiol S-methyltransferase 2 (259 aa).

The next 5 membrane-spanning stretches (helical) occupy residues 5 to 25 (LAIL…FLYA), 46 to 66 (LGEA…QHSV), 88 to 108 (TYVL…RPIP), 115 to 135 (SGIA…IAFA), and 182 to 202 (FLLA…FALA).

This sequence belongs to the nurim family.

The protein resides in the membrane. The catalysed reaction is methanethiol + S-adenosyl-L-methionine = dimethyl sulfide + S-adenosyl-L-homocysteine + H(+). Catalyzes the methylation of methanethiol (MeSH) to yield dimethylsulphide (DMS). This chain is Methanethiol S-methyltransferase 2, found in Bradyrhizobium diazoefficiens (strain JCM 10833 / BCRC 13528 / IAM 13628 / NBRC 14792 / USDA 110).